The following is a 255-amino-acid chain: Ribosomal RNA small subunit methyltransferase A (255 aa).

Residues Asn11, Leu13, Gly38, Glu59, Asp83, and Asn101 each contribute to the S-adenosyl-L-methionine site.

The protein belongs to the class I-like SAM-binding methyltransferase superfamily. rRNA adenine N(6)-methyltransferase family. RsmA subfamily.

It is found in the cytoplasm. The catalysed reaction is adenosine(1518)/adenosine(1519) in 16S rRNA + 4 S-adenosyl-L-methionine = N(6)-dimethyladenosine(1518)/N(6)-dimethyladenosine(1519) in 16S rRNA + 4 S-adenosyl-L-homocysteine + 4 H(+). Its function is as follows. Specifically dimethylates two adjacent adenosines (A1518 and A1519) in the loop of a conserved hairpin near the 3'-end of 16S rRNA in the 30S particle. May play a critical role in biogenesis of 30S subunits. This chain is Ribosomal RNA small subunit methyltransferase A, found in Thiobacillus denitrificans (strain ATCC 25259 / T1).